Here is a 519-residue protein sequence, read N- to C-terminus: Ribonuclease Y (519 aa).

The helical transmembrane segment at 3–23 (PLAILISILLSLFCLVVGYYV) threads the bilayer. The region spanning 209 to 272 (TVSVVNLPND…ETARIALDKL (64 aa)) is the KH domain. The HD domain maps to 335–428 (VLKHSMEVAF…VAAADALSAA (94 aa)).

The protein belongs to the RNase Y family.

It localises to the cell membrane. Functionally, endoribonuclease that initiates mRNA decay. The protein is Ribonuclease Y of Bacillus licheniformis (strain ATCC 14580 / DSM 13 / JCM 2505 / CCUG 7422 / NBRC 12200 / NCIMB 9375 / NCTC 10341 / NRRL NRS-1264 / Gibson 46).